A 111-amino-acid chain; its full sequence is Heavy metal-associated isoprenylated plant protein 10 (111 aa).

In terms of domain architecture, HMA spans 1–68; the sequence is MQETVVFEWG…ICDYVDITAV (68 aa). The tract at residues 68-111 is disordered; that stretch reads VGPEGQPAQNRNPVKKPEPKVIRGRPYPPQKKTPGKNSDECIIL. Cysteine 108 is subject to Cysteine methyl ester. A lipid anchor (S-farnesyl cysteine) is attached at cysteine 108. Residues 109-111 constitute a propeptide, removed in mature form; the sequence is IIL.

It belongs to the HIPP family.

Its function is as follows. Probable heavy-metal-binding protein. The sequence is that of Heavy metal-associated isoprenylated plant protein 10 from Arabidopsis thaliana (Mouse-ear cress).